The sequence spans 179 residues: Acireductone dioxygenase (179 aa).

4 residues coordinate Fe(2+): H99, H101, E105, and H144. Residues H99, H101, E105, and H144 each contribute to the Ni(2+) site.

This sequence belongs to the acireductone dioxygenase (ARD) family. In terms of assembly, monomer. The cofactor is Fe(2+). Requires Ni(2+) as cofactor.

It catalyses the reaction 1,2-dihydroxy-5-(methylsulfanyl)pent-1-en-3-one + O2 = 3-(methylsulfanyl)propanoate + CO + formate + 2 H(+). It carries out the reaction 1,2-dihydroxy-5-(methylsulfanyl)pent-1-en-3-one + O2 = 4-methylsulfanyl-2-oxobutanoate + formate + 2 H(+). It functions in the pathway amino-acid biosynthesis; L-methionine biosynthesis via salvage pathway; L-methionine from S-methyl-5-thio-alpha-D-ribose 1-phosphate: step 5/6. Catalyzes 2 different reactions between oxygen and the acireductone 1,2-dihydroxy-3-keto-5-methylthiopentene (DHK-MTPene) depending upon the metal bound in the active site. Fe-containing acireductone dioxygenase (Fe-ARD) produces formate and 2-keto-4-methylthiobutyrate (KMTB), the alpha-ketoacid precursor of methionine in the methionine recycle pathway. Ni-containing acireductone dioxygenase (Ni-ARD) produces methylthiopropionate, carbon monoxide and formate, and does not lie on the methionine recycle pathway. The protein is Acireductone dioxygenase of Exiguobacterium sibiricum (strain DSM 17290 / CCUG 55495 / CIP 109462 / JCM 13490 / 255-15).